We begin with the raw amino-acid sequence, 92 residues long: Defensin-like protein 226 (92 aa).

Positions 1-27 (MKCGVLFMISCLLITFLVLSHVREVES) are cleaved as a signal peptide. Intrachain disulfides connect Cys33/Cys92, Cys43/Cys71, Cys51/Cys86, and Cys69/Cys88.

This sequence belongs to the DEFL family.

The protein resides in the secreted. This is Defensin-like protein 226 (SCRL2) from Arabidopsis thaliana (Mouse-ear cress).